Reading from the N-terminus, the 320-residue chain is MRGSVFGFVPSFRIRFFASSTHIIDTMKTLQEYLSASHAPEDLGKIIMMIADQAGPIRSAFISNQNYAGSTNSSGEDQAEMDTWADTRITSVLQESGLVRSIASEEQEDITEMSPSAKYSVVMDPLDGSSLIKVNLTVGTIVGIYEGDVLQAGNKLRAAFYMLYGPLTTLTISLGNGVSIFAMNEEGTYVLLKENVRIPEGTLCGSGGLRPEWTEKHIQYMNAIECEGGKNRYSGSFVADFHQILEYGGVYAYPATKKSASGKLRLVFEINPIGFLAVQAGGAVSNGESSTLEIVPTKVHQRTPVYVGSKGMIAKIEAIR.

Residues Glu105, Asp124, Leu126, and Asp127 each coordinate Mg(2+). Substrate contacts are provided by residues 127 to 130 (DGSS), Tyr233, and Lys263. Glu269 is a Mg(2+) binding site.

Belongs to the FBPase class 1 family. As to quaternary structure, homotetramer. Mg(2+) serves as cofactor.

The protein localises to the cytoplasm. It carries out the reaction beta-D-fructose 1,6-bisphosphate + H2O = beta-D-fructose 6-phosphate + phosphate. It functions in the pathway carbohydrate biosynthesis; gluconeogenesis. This Methanocorpusculum labreanum (strain ATCC 43576 / DSM 4855 / Z) protein is Fructose-1,6-bisphosphatase class 1.